We begin with the raw amino-acid sequence, 317 residues long: L-lactate dehydrogenase (317 aa).

Residues valine 17, aspartate 38, lysine 43, tyrosine 69, and 83-84 (GA) contribute to the NAD(+) site. Substrate-binding residues include glutamine 86 and arginine 92. NAD(+)-binding positions include serine 105, 122 to 124 (ATN), and serine 147. 124 to 127 (NPVD) contributes to the substrate binding site. Position 152-155 (152-155 (DTAR)) interacts with substrate. Arginine 157 and histidine 172 together coordinate beta-D-fructose 1,6-bisphosphate. Catalysis depends on histidine 179, which acts as the Proton acceptor. The residue at position 224 (tyrosine 224) is a Phosphotyrosine. Threonine 233 is a substrate binding site.

The protein belongs to the LDH/MDH superfamily. LDH family. As to quaternary structure, homotetramer.

The protein localises to the cytoplasm. The enzyme catalyses (S)-lactate + NAD(+) = pyruvate + NADH + H(+). It participates in fermentation; pyruvate fermentation to lactate; (S)-lactate from pyruvate: step 1/1. Allosterically activated by fructose 1,6-bisphosphate (FBP). Catalyzes the conversion of lactate to pyruvate. This Bacillus caldolyticus protein is L-lactate dehydrogenase.